A 179-amino-acid polypeptide reads, in one-letter code: Ribosome maturation factor RimP (179 aa).

This sequence belongs to the RimP family.

It localises to the cytoplasm. In terms of biological role, required for maturation of 30S ribosomal subunits. The sequence is that of Ribosome maturation factor RimP from Chlorobium chlorochromatii (strain CaD3).